Here is a 146-residue protein sequence, read N- to C-terminus: Prepilin peptidase-dependent protein D (146 aa).

A propeptide spans 1–6 (MDKQRG) (leader sequence). Residue Phe7 is modified to N-methylphenylalanine. A helical transmembrane segment spans residues 7-27 (FTLIELMVVIGIIAILSAIGI).

It belongs to the N-Me-Phe pilin family.

It localises to the fimbrium. It is found in the membrane. Major component of the type IV pilus (T4P) that plays a role in cell adhesion and motility. Not produced when grown under standard laboratory conditions. This Escherichia coli (strain K12) protein is Prepilin peptidase-dependent protein D (ppdD).